Here is a 401-residue protein sequence, read N- to C-terminus: 8-amino-7-oxononanoate synthase (401 aa).

Residue arginine 24 participates in substrate binding. Residue 111-112 (GF) coordinates pyridoxal 5'-phosphate. Histidine 137 contributes to the substrate binding site. Residues serine 183, histidine 211, and threonine 240 each coordinate pyridoxal 5'-phosphate. Lysine 243 bears the N6-(pyridoxal phosphate)lysine mark. Threonine 357 lines the substrate pocket.

Belongs to the class-II pyridoxal-phosphate-dependent aminotransferase family. BioF subfamily. As to quaternary structure, homodimer. Pyridoxal 5'-phosphate serves as cofactor.

It catalyses the reaction 6-carboxyhexanoyl-[ACP] + L-alanine + H(+) = (8S)-8-amino-7-oxononanoate + holo-[ACP] + CO2. Its pathway is cofactor biosynthesis; biotin biosynthesis. Its function is as follows. Catalyzes the decarboxylative condensation of pimeloyl-[acyl-carrier protein] and L-alanine to produce 8-amino-7-oxononanoate (AON), [acyl-carrier protein], and carbon dioxide. The protein is 8-amino-7-oxononanoate synthase of Xanthomonas campestris pv. campestris (strain B100).